The primary structure comprises 211 residues: LexA repressor (211 aa).

The segment at residues Q27 to D47 is a DNA-binding region (H-T-H motif). Active-site for autocatalytic cleavage activity residues include S131 and K168.

This sequence belongs to the peptidase S24 family. As to quaternary structure, homodimer.

It carries out the reaction Hydrolysis of Ala-|-Gly bond in repressor LexA.. Functionally, represses a number of genes involved in the response to DNA damage (SOS response), including recA and lexA. In the presence of single-stranded DNA, RecA interacts with LexA causing an autocatalytic cleavage which disrupts the DNA-binding part of LexA, leading to derepression of the SOS regulon and eventually DNA repair. The protein is LexA repressor of Xylella fastidiosa (strain M12).